Reading from the N-terminus, the 287-residue chain is MASGREIKTKIKSVQNTRKVTRALEMVSASKIRKAQDRMKTSRPYAQAMKQVIGHLAQASTDYQHPFLVEREQVKRVGFIVISSDRGLAGGLNNNLFRKLLGEAKAWQDKGAEVDMVTIGQKASTFFRRVKVNMVGSVTHIGDVPKLESLIGVIKVMLDAFTEGKIDRVYLVYNRFINTMTQKASFDQLLPLPAAEKQVAHHDWDYLYEPDAATVLEHVMTRYIESLVYQALLENVASEHAARMVAMKSASDNANKLIGDLQLVYNKARQAAITQEISEIVGGAAAV.

The protein belongs to the ATPase gamma chain family. As to quaternary structure, F-type ATPases have 2 components, CF(1) - the catalytic core - and CF(0) - the membrane proton channel. CF(1) has five subunits: alpha(3), beta(3), gamma(1), delta(1), epsilon(1). CF(0) has three main subunits: a, b and c.

The protein resides in the cell inner membrane. In terms of biological role, produces ATP from ADP in the presence of a proton gradient across the membrane. The gamma chain is believed to be important in regulating ATPase activity and the flow of protons through the CF(0) complex. This Stenotrophomonas maltophilia (strain R551-3) protein is ATP synthase gamma chain.